The chain runs to 367 residues: Heme A synthase (367 aa).

The next 8 membrane-spanning stretches (helical) occupy residues 25-45 (ALRL…LVGG), 111-131 (LIAR…WLTG), 139-159 (WPLV…WWMV), 174-194 (LATH…IMRG), 210-230 (GLAA…ALVA), 272-292 (FIHR…MVIA), 305-325 (AVLL…TLLM), and 327-347 (VPLH…GFAV). Position 274 (His274) interacts with heme. His335 lines the heme pocket.

Belongs to the COX15/CtaA family. Type 2 subfamily. In terms of assembly, interacts with CtaB. Heme b is required as a cofactor.

The protein resides in the cell membrane. It catalyses the reaction Fe(II)-heme o + 2 A + H2O = Fe(II)-heme a + 2 AH2. It functions in the pathway porphyrin-containing compound metabolism; heme A biosynthesis; heme A from heme O: step 1/1. Its function is as follows. Catalyzes the conversion of heme O to heme A by two successive hydroxylations of the methyl group at C8. The first hydroxylation forms heme I, the second hydroxylation results in an unstable dihydroxymethyl group, which spontaneously dehydrates, resulting in the formyl group of heme A. In Rhizobium etli (strain ATCC 51251 / DSM 11541 / JCM 21823 / NBRC 15573 / CFN 42), this protein is Heme A synthase.